A 215-amino-acid polypeptide reads, in one-letter code: Beta-crystallin A3-2 (215 aa).

The tract at residues 1-30 (MEIPAIQTEREDITSEKMAQINPLPVPLGP) is N-terminal arm. 2 consecutive Beta/gamma crystallin 'Greek key' domains span residues 31–70 (WKIT…KVEC) and 71–117 (GAWI…RPIC). Residues 118 to 123 (SANHEE) are connecting peptide. 2 consecutive Beta/gamma crystallin 'Greek key' domains span residues 124–165 (SKLV…KVQC) and 166–214 (GAWV…RRIQ).

Belongs to the beta/gamma-crystallin family. Homo/heterodimer, or complexes of higher-order. The structure of beta-crystallin oligomers seems to be stabilized through interactions between the N-terminal arms. In terms of processing, the N-terminus is blocked.

Functionally, crystallins are the dominant structural components of the vertebrate eye lens. The chain is Beta-crystallin A3-2 from Aquarana catesbeiana (American bullfrog).